Consider the following 212-residue polypeptide: Uridine kinase (212 aa).

13-20 serves as a coordination point for ATP; it reads GASASGKS.

The protein belongs to the uridine kinase family.

It localises to the cytoplasm. The catalysed reaction is uridine + ATP = UMP + ADP + H(+). It carries out the reaction cytidine + ATP = CMP + ADP + H(+). Its pathway is pyrimidine metabolism; CTP biosynthesis via salvage pathway; CTP from cytidine: step 1/3. It participates in pyrimidine metabolism; UMP biosynthesis via salvage pathway; UMP from uridine: step 1/1. The protein is Uridine kinase of Shewanella baltica (strain OS155 / ATCC BAA-1091).